Here is a 154-residue protein sequence, read N- to C-terminus: Probable archaeosortase D (154 aa).

Transmembrane regions (helical) follow at residues alanine 6 to leucine 26, isoleucine 57 to isoleucine 77, tyrosine 91 to isoleucine 111, and valine 125 to leucine 145. Cysteine 64 functions as the Acyl-thioester intermediate in the catalytic mechanism. The active-site Proton donor is arginine 106.

It belongs to the exosortase/archaeosortase family. Archaeosortase D subfamily.

The protein resides in the cell membrane. Transpeptidase that recognizes and modifies its substrate by proteolytic cleavage of a sorting signal. Following cleavage, a covalent intermediate is formed via a thioester bond between the archaeosortase and its substrate, which is then transferred and covalently attached to the cell membrane. The sequence is that of Probable archaeosortase D from Methanocaldococcus jannaschii (strain ATCC 43067 / DSM 2661 / JAL-1 / JCM 10045 / NBRC 100440) (Methanococcus jannaschii).